The chain runs to 1427 residues: ATP-binding cassette transporter abc1 (1427 aa).

The helical transmembrane segment at 26–46 (LLLFYLSLFSLTNLFLIQKLF) threads the bilayer. A glycan (N-linked (GlcNAc...) asparagine) is linked at Asn49. Transmembrane regions (helical) follow at residues 63 to 83 (CLLE…SFYL), 87 to 107 (AVWW…NILS), 115 to 135 (LFSW…LISI), 155 to 175 (LLLP…PLFF), 197 to 217 (CSIF…WKSW), 262 to 282 (ILLM…TPLA), 298 to 318 (GNSP…ASVV), 345 to 367 (VLTS…YVYN), and 397 to 417 (MYFL…LAIL). Positions 262-549 (ILLMVFLSVL…LASVSRQFIQ (288 aa)) constitute an ABC transmembrane type-1 1 domain. Asn437 carries N-linked (GlcNAc...) asparagine glycosylation. The next 2 helical transmembrane spans lie at 489 to 509 (IIFK…TFAI) and 513 to 533 (IMGH…FGLL). N-linked (GlcNAc...) asparagine glycans are attached at residues Asn567, Asn581, and Asn601. The 229-residue stretch at 579–807 (FENTSLSWSP…PSTFFSSNTK (229 aa)) folds into the ABC transporter 1 domain. Residues 609–629 (FTLVVGSTGSGKSTLAMALLG) traverse the membrane as a helical segment. 614-621 (GSTGSGKS) lines the ATP pocket. N-linked (GlcNAc...) asparagine glycosylation is found at Asn658 and Asn703. Residues 760 to 780 (IILFTHNVSLCLPIAENVIVL) form a helical membrane-spanning segment. N-linked (GlcNAc...) asparagine glycans are attached at residues Asn782 and Asn842. Residues 862 to 1142 (ILGSILLVMM…FVRANNEILT (281 aa)) form the ABC transmembrane type-1 2 domain. Transmembrane regions (helical) follow at residues 866-886 (ILLV…IALW), 896-916 (LPSS…YFLM), and 973-993 (LLWA…ITML). Asn994 carries N-linked (GlcNAc...) asparagine glycosylation. 3 consecutive transmembrane segments (helical) span residues 995-1015 (VTLV…LVYL), 1086-1106 (LAIR…LIAL), and 1114-1134 (GLVG…LVFV). Residues Asn1161 and Asn1184 are each glycosylated (N-linked (GlcNAc...) asparagine). Positions 1180 to 1422 (VSIKNLTVSY…RRAFWKMCKE (243 aa)) constitute an ABC transporter 2 domain. ATP is bound at residue 1214–1221 (GRTGSGKS). A helical membrane pass occupies residues 1223-1243 (MGLTLLRFTMIMSGAVEVDGI). An N-linked (GlcNAc...) asparagine glycan is attached at Asn1324.

This sequence belongs to the ABC transporter superfamily. ABCC family. Conjugate transporter (TC 3.A.1.208) subfamily.

It is found in the membrane. The protein is ATP-binding cassette transporter abc1 (abc1) of Schizosaccharomyces pombe (strain 972 / ATCC 24843) (Fission yeast).